The chain runs to 132 residues: Phosphoribosyl-ATP pyrophosphatase (132 aa).

Belongs to the PRA-PH family.

The protein localises to the cytoplasm. The catalysed reaction is 1-(5-phospho-beta-D-ribosyl)-ATP + H2O = 1-(5-phospho-beta-D-ribosyl)-5'-AMP + diphosphate + H(+). It functions in the pathway amino-acid biosynthesis; L-histidine biosynthesis; L-histidine from 5-phospho-alpha-D-ribose 1-diphosphate: step 2/9. This is Phosphoribosyl-ATP pyrophosphatase from Acidovorax sp. (strain JS42).